Reading from the N-terminus, the 438-residue chain is Forkhead box protein J1 (438 aa).

The fork-head DNA-binding region spans 123 to 217 (KPPYSYATLI…MNGAMKKRRL (95 aa)).

This sequence belongs to the FOXJ1 family.

It is found in the nucleus. Functionally, key transcription factor required for motile ciliogenesis. Activates genes essential for motile cilia formation and function. This Xenopus tropicalis (Western clawed frog) protein is Forkhead box protein J1.